Reading from the N-terminus, the 331-residue chain is Major outer membrane protein P.IB (331 aa).

Residues Met-1–Ala-19 form the signal peptide.

The protein belongs to the Gram-negative porin family. As to quaternary structure, homotrimer.

It is found in the cell outer membrane. Serves as a slightly cation selective porin. The polypeptide is Major outer membrane protein P.IB (porB) (Neisseria meningitidis serogroup B (strain ATCC BAA-335 / MC58)).